The following is a 1233-amino-acid chain: Mitogen-activated protein kinase kinase kinase kinase 4 (1233 aa).

Ala-2 is subject to N-acetylalanine. At Ser-5 the chain carries Phosphoserine. The 265-residue stretch at 25–289 (FELVEVVGNG…EQLLKHPFIR (265 aa)) folds into the Protein kinase domain. Residues 31–39 (VGNGTYGQV) and Lys-53 contribute to the ATP site. Asp-152 acts as the Proton acceptor in catalysis. Disordered stretches follow at residues 305–348 (IDRT…VPGE), 401–463 (QKEQ…VERE), and 489–805 (QAML…ETES). Residues 316–337 (DETEYEYSGSEEEEEEVPEQEG) show a composition bias toward acidic residues. Phosphoserine is present on residues Ser-323 and Ser-325. Positions 521-537 (PEPKPHYDPADRAREVQ) are enriched in basic and acidic residues. Ser-543 bears the Phosphoserine mark. Positions 544-559 (LKNNVSPVSRSHSFSD) are enriched in polar residues. Phosphoserine occurs at positions 619, 621, 629, and 646. The segment covering 654–663 (LLWERVEKLV) has biased composition (basic and acidic residues). Over residues 666–692 (PGSGSSSGSSNSGSQPGSHPGSQSGSG) the composition is skewed to low complexity. A phosphoserine mark is found at Ser-691, Ser-703, and Ser-706. Composition is skewed to basic and acidic residues over residues 713–726 (SAAK…EVFR) and 741–756 (KELR…HKVT). Positions 766-781 (GTTDEEEEDVEQEGAD) are enriched in acidic residues. Polar residues predominate over residues 783-803 (STSGPEDTRAASSPNLSNGET). A phosphoserine mark is found at Ser-785, Ser-794, Ser-795, Ser-799, and Ser-817. Thr-822 is modified (phosphothreonine). A phosphoserine mark is found at Ser-846, Ser-849, Ser-894, and Ser-907. The mediates interaction with RAP2A stretch occupies residues 852–1206 (PFIDPRLLQI…LKFLCGRNDK (355 aa)). Residues 920–1207 (NSEILCAALW…KFLCGRNDKV (288 aa)) form the CNH domain.

The protein belongs to the protein kinase superfamily. STE Ser/Thr protein kinase family. STE20 subfamily. In terms of assembly, interacts with the SH3 domain of the adapter proteins Nck. Interacts (via its CNH regulatory domain) with ATL1 (via the N-terminal region). Interacts with RAP2A (GTP-bound form preferentially). Mg(2+) serves as cofactor. In terms of tissue distribution, appears to be ubiquitous, expressed in all tissue types examined. Highest levels observed in heart and brain.

It is found in the cytoplasm. It carries out the reaction L-seryl-[protein] + ATP = O-phospho-L-seryl-[protein] + ADP + H(+). The enzyme catalyses L-threonyl-[protein] + ATP = O-phospho-L-threonyl-[protein] + ADP + H(+). Its function is as follows. Serine/threonine kinase that plays a role in the response to environmental stress and cytokines such as TNF-alpha. Appears to act upstream of the JUN N-terminal pathway. Activator of the Hippo signaling pathway which plays a pivotal role in organ size control and tumor suppression by restricting proliferation and promoting apoptosis. MAP4Ks act in parallel to and are partially redundant with STK3/MST2 and STK4/MST2 in the phosphorylation and activation of LATS1/2, and establish MAP4Ks as components of the expanded Hippo pathway. Phosphorylates SMAD1 on Thr-322. The protein is Mitogen-activated protein kinase kinase kinase kinase 4 (Map4k4) of Mus musculus (Mouse).